The primary structure comprises 1486 residues: Chromosome partition protein MukB (1486 aa).

ATP is bound at residue 34–41; sequence GGNGAGKS. Coiled-coil stretches lie at residues 326-418, 444-480, and 509-603; these read LEAD…QYNQ, LETF…QAYQ, and RHLA…RAPV. The segment at 666–783 is flexible hinge; it reads PGGSEDQRLN…EVPLFGRAAR (118 aa). Coiled coils occupy residues 835 to 923, 977 to 1115, and 1209 to 1266; these read EAEI…AKLE, EMLS…TAKA, and VEAI…QNVS.

This sequence belongs to the SMC family. MukB subfamily. In terms of assembly, homodimerization via its hinge domain. Binds to DNA via its C-terminal region. Interacts, and probably forms a ternary complex, with MukE and MukF via its C-terminal region. The complex formation is stimulated by calcium or magnesium. Interacts with tubulin-related protein FtsZ.

The protein localises to the cytoplasm. It localises to the nucleoid. Plays a central role in chromosome condensation, segregation and cell cycle progression. Functions as a homodimer, which is essential for chromosome partition. Involved in negative DNA supercoiling in vivo, and by this means organize and compact chromosomes. May achieve or facilitate chromosome segregation by condensation DNA from both sides of a centrally located replisome during cell division. This chain is Chromosome partition protein MukB, found in Escherichia coli O6:K15:H31 (strain 536 / UPEC).